The following is a 431-amino-acid chain: MNDYLEIIDVVARQILDSRCFPTVEVEVYLEDGTIGRAAVPSGASTGMYEAVELRDGDKDKYLGKGVLTAVQNVNDTIAEALIGCNVFDQPYIDKMLIELDGTDNKGKLGANAILGVSLAVANAAANALGLSLYKYVGGVNAKVLPVPMMNIINGGSHADNSVDLQEFMIMPVGATSFTEALRMCAEVYHTLKNTLKDKGYATGLGDEGGFAPNLKSNAEAIDVIIEAITKAGYKAGEDMFIAIDAASSEYYKDGKYVLENEGKTLTSAEMVDFFEDWVNKYPIISIEDGMAEEDWDGWKLLNERLGKKVQLVGDDLFVTNTERLEKGIEIGAANSILIKLNQIGTLTETLNAIEMANRAGYTAVISHRSGETEDTTISDLVVAVNAGQIKTGAPARSERVAKYNQLLRIEEELEDVAEYRGKKAFFNIKK.

Q166 lines the (2R)-2-phosphoglycerate pocket. The active-site Proton donor is E208. Residues D245, E288, and D315 each contribute to the Mg(2+) site. 4 residues coordinate (2R)-2-phosphoglycerate: K340, R369, S370, and K391. K340 serves as the catalytic Proton acceptor.

This sequence belongs to the enolase family. The cofactor is Mg(2+).

The protein localises to the cytoplasm. It localises to the secreted. The protein resides in the cell surface. It catalyses the reaction (2R)-2-phosphoglycerate = phosphoenolpyruvate + H2O. It participates in carbohydrate degradation; glycolysis; pyruvate from D-glyceraldehyde 3-phosphate: step 4/5. In terms of biological role, catalyzes the reversible conversion of 2-phosphoglycerate (2-PG) into phosphoenolpyruvate (PEP). It is essential for the degradation of carbohydrates via glycolysis. The polypeptide is Enolase (Clostridium botulinum (strain Eklund 17B / Type B)).